Reading from the N-terminus, the 541-residue chain is Glutamyl-tRNA(Gln) amidotransferase subunit B, mitochondrial (541 aa).

This sequence belongs to the GatB/GatE family. GatB subfamily. Subunit of the heterotrimeric GatFAB amidotransferase (AdT) complex, composed of A, B and F subunits.

Its subcellular location is the mitochondrion. It carries out the reaction L-glutamyl-tRNA(Gln) + L-glutamine + ATP + H2O = L-glutaminyl-tRNA(Gln) + L-glutamate + ADP + phosphate + H(+). Allows the formation of correctly charged Gln-tRNA(Gln) through the transamidation of misacylated Glu-tRNA(Gln) in the mitochondria. The reaction takes place in the presence of glutamine and ATP through an activated gamma-phospho-Glu-tRNA(Gln). The protein is Glutamyl-tRNA(Gln) amidotransferase subunit B, mitochondrial of Saccharomyces cerevisiae (strain RM11-1a) (Baker's yeast).